Here is a 1125-residue protein sequence, read N- to C-terminus: MLEADLVSKMLRAVLQSHKNGIALPRLQGEYRSLTGDWIPFKQLGYPTLEAYLRSVPAVVRIETSRSGEITCYAMACTETARIAQLVARQRSSKRKTGRQVNCQMRVKKTMPFFLEGKPKATLRQPGFSSDFSVSKKPNPTLLRDKGNSLGVKSDAEMPPYTLHTTLRSEVFKDVPVQRHVTMSTNNRVIPMCSHPDVDPLQYVGSVFKKHKYLRFSPKASLPPPFQMHLSRTCAKEMNGNLSQTVEKPNVTPPASYTYKMDEVQNRIKEILNKHNNGIWISKLPHFYKELYKEELNQGILQQFEHWPHICTVEKPGSGGQDLLLYPAKRKQLLRSELDGEKVPPSPLPAPKQIPPLKGCPAVMPGDFKEKVAELLTKYSSGLWASALPKAFEDMYKMKFPEDALKNLASLSDVCTIDYISGNPQKAILYAKLPLPTDKILKDAGQAHGDYDIKSMIEQEYLQIEENIAKSVDTFLENTAVPPLIIPTEASPSVLVVELSNTNEVVIRYVGKDYSAAQELMEDEMKEYYSKNPKVTPVQTVHVGQLLAVNAEEDAWLRAQIISTEENRIKVCYVDYGFSENIEKSKAYKLNPKFCSLSFQATKCKLAGLEVLSDDPDLVKVVESLTCGKIFAVEILEKADIPLVVLYDTSGDDDVNINATCLKAICDKSLEAHLQIDAMYTNVRVTNICSDGTLYCQVPCKGLNKLNDLLHKIEDYFHCKHMTSEYFVSLPFCGKVCLFHCKGKWLRVEITNVHSSRALDVQFLDSGTVTSVKVSELREIPPRFLQEIIVIPPQAIKCCLADLPQSIGMWTPDAVLWLRDSVLNCSDCSIKVTKVDETRGIAHIYLFTPKNFPDPHRSINRQITNADLWKHQKDVFLSAISSGTSSPNSKSGSTPVPGSTGDNFRKSLTDAIKKSVVDHTSSLSVEELPPPVHLSKPGEHMDVYVPVACHPGYFVIQPWQEIHKLEVLMEEMILYYSVSEERHVAVEKDQVYAAKVENKWHRVLLKGILTNGLVSVYELDYGKHELVNIRKVQPLAAVFRKLPFQAVTAQLAGVKCNQWSEEASMVFRNHVEKKPLVALVQTVIENANPWDRKVVVYLVDTSLPDTDIWIHDFMSEYLVELSKVN.

Residues 3-76 (EADLVSKMLR…SGEITCYAMA (74 aa)) form the HTH OST-type 1 domain. Positions 126-157 (PGFSSDFSVSKKPNPTLLRDKGNSLGVKSDAE) are disordered. Positions 127-138 (GFSSDFSVSKKP) are enriched in polar residues. The region spanning 260–329 (KMDEVQNRIK…GQDLLLYPAK (70 aa)) is the HTH OST-type 2 domain. At Ser-346 the chain carries Phosphoserine. Positions 364–433 (MPGDFKEKVA…PQKAILYAKL (70 aa)) constitute an HTH OST-type 3 domain. 2 consecutive Tudor domains span residues 540–597 (TVHV…FCSL) and 730–787 (LPFC…FLQE). Positions 881–895 (SSGTSSPNSKSGSTP) are enriched in low complexity. Residues 881–904 (SSGTSSPNSKSGSTPVPGSTGDNF) form a disordered region. A Phosphoserine modification is found at Ser-886. Positions 888–1125 (NSKSGSTPVP…EYLVELSKVN (238 aa)) are interaction with CDK17. Positions 920–1125 (TSSLSVEELP…EYLVELSKVN (206 aa)) are interaction with CABLES1.

It belongs to the TDRD7 family. In terms of assembly, found in a mRNP complex, at least composed of TDRD1, TDRD6, TDRD7 and DDX4. Found in a complex containing CABLES1, CDK16 and CDK17. Interacts with CABLES1, CDK17 and PIWIL1.

Its subcellular location is the cytoplasm. Functionally, component of specific cytoplasmic RNA granules involved in post-transcriptional regulation of specific genes: probably acts by binding to specific mRNAs and regulating their translation. Required for lens transparency during lens development, by regulating translation of genes such as CRYBB3 and HSPB1 in the developing lens. Also required during spermatogenesis. The protein is Tudor domain-containing protein 7 (TDRD7) of Canis lupus familiaris (Dog).